The sequence spans 125 residues: Small ribosomal subunit protein uS12 (125 aa).

At D89 the chain carries 3-methylthioaspartic acid. Positions 104–125 are disordered; sequence TAGVKDRSQSRSKYGAKASKQD.

It belongs to the universal ribosomal protein uS12 family. As to quaternary structure, part of the 30S ribosomal subunit. Contacts proteins S8 and S17. May interact with IF1 in the 30S initiation complex.

With S4 and S5 plays an important role in translational accuracy. In terms of biological role, interacts with and stabilizes bases of the 16S rRNA that are involved in tRNA selection in the A site and with the mRNA backbone. Located at the interface of the 30S and 50S subunits, it traverses the body of the 30S subunit contacting proteins on the other side and probably holding the rRNA structure together. The combined cluster of proteins S8, S12 and S17 appears to hold together the shoulder and platform of the 30S subunit. The chain is Small ribosomal subunit protein uS12 from Prochlorococcus marinus (strain MIT 9303).